The chain runs to 611 residues: tRNA uridine 5-carboxymethylaminomethyl modification enzyme MnmG (611 aa).

14–19 (GAGHAG) is a binding site for FAD. 274–288 (GPRYCPSIEDKIVKF) serves as a coordination point for NAD(+).

Belongs to the MnmG family. As to quaternary structure, homodimer. Heterotetramer of two MnmE and two MnmG subunits. Requires FAD as cofactor.

The protein localises to the cytoplasm. Functionally, NAD-binding protein involved in the addition of a carboxymethylaminomethyl (cmnm) group at the wobble position (U34) of certain tRNAs, forming tRNA-cmnm(5)s(2)U34. The polypeptide is tRNA uridine 5-carboxymethylaminomethyl modification enzyme MnmG (Chlamydia felis (strain Fe/C-56) (Chlamydophila felis)).